We begin with the raw amino-acid sequence, 1838 residues long: Type III effector DspE (1838 aa).

Residues 1–12 (MELKSLGTEHKA) show a composition bias toward basic and acidic residues. 6 disordered regions span residues 1 to 72 (MELK…AAHQ), 86 to 163 (KKFS…PTQQ), 182 to 264 (MAHP…VATP), 281 to 300 (LEGT…LKGS), 398 to 418 (DGKS…KTML), and 1480 to 1505 (NLAA…SNNR). Over residues 27–46 (ALQQGSSSSSPQNAAASLAA) the composition is skewed to low complexity. The segment covering 91-103 (SAPQGQPGTTHSK) has biased composition (polar residues). A compositionally biased stretch (basic and acidic residues) spans 110-120 (LLARDDGETQH). Polar residues predominate over residues 407 to 418 (GSGTQSHNKTML). The span at 1480-1502 (NLAAGSRERSTTSGQFGSTTSAS) shows a compositional bias: low complexity.

Belongs to the AvrE family. Interacts with the chaperone DspF (DspB/F).

Its subcellular location is the secreted. It localises to the host cell. With respect to regulation, polyamidoamine dendrimers inhibit channel and virulence activities. Major virulence factor that may function as a water- and solute-permeable channel dedicated to creating osmotic/water potential perturbation and a water- and nutrient-rich apoplast in which bacteria multiply within the infected plant tissues. Expression in Xenopus oocytes results in inward and outward currents, permeability to water and osmolarity-dependent oocyte swelling and bursting. Functionally, acts as a major cell-death inducer during fire blight, a necrotic disease affecting plants of the rosaceous family, and during hypersensitive response (HR) on non-host plants. Essential for pathogenicity on host plants. Contributes quantitatively and in a strain-dependent fashion to HR elicitation in non-host plants such as tobacco. Induces cell death in leaves of apple, a host plant, and tobacco, a non-host plant. Also triggers necrosis in the widely used model, non-host, N.benthamiana and in yeast. Required for the transient multiplication and survival of E.amylovora in non-host A.thaliana leaves. In A.thaliana, triggers electrolyte leakage, activation of defense pathways, reactive oxygen species (ROS) accumulation and cell death. The toxicity of DspE in A.thaliana is associated with an early repression of de novo protein synthesis. In Erwinia amylovora (Fire blight bacteria), this protein is Type III effector DspE.